A 25-amino-acid polypeptide reads, in one-letter code: ATP synthase subunit alpha, mitochondrial (25 aa).

Belongs to the ATPase alpha/beta chains family. F-type ATPases have 2 components, CF(1) - the catalytic core - and CF(0) - the membrane proton channel. CF(1) has five subunits: alpha(3), beta(3), gamma(1), delta(1), epsilon(1). CF(0) has three main subunits: a, b and c.

Its subcellular location is the mitochondrion. It is found in the mitochondrion inner membrane. Its function is as follows. Mitochondrial membrane ATP synthase (F(1)F(0) ATP synthase or Complex V) produces ATP from ADP in the presence of a proton gradient across the membrane which is generated by electron transport complexes of the respiratory chain. F-type ATPases consist of two structural domains, F(1) - containing the extramembraneous catalytic core, and F(0) - containing the membrane proton channel, linked together by a central stalk and a peripheral stalk. During catalysis, ATP synthesis in the catalytic domain of F(1) is coupled via a rotary mechanism of the central stalk subunits to proton translocation. Subunits alpha and beta form the catalytic core in F(1). Rotation of the central stalk against the surrounding alpha(3)beta(3) subunits leads to hydrolysis of ATP in three separate catalytic sites on the beta subunits. Subunit alpha does not bear the catalytic high-affinity ATP-binding sites. This Spinacia oleracea (Spinach) protein is ATP synthase subunit alpha, mitochondrial (ATPA).